Consider the following 564-residue polypeptide: Nucleoprotein (564 aa).

Residues 54 to 236 (LRKTKRGEED…VTKDESSINI (183 aa)) are binding site for the cap structure m7GTP. The Mn(2+) site is built by aspartate 380 and glutamate 382. The Zn(2+) site is built by glutamate 390, cysteine 497, histidine 500, and cysteine 525. Aspartate 529 provides a ligand contact to Mn(2+).

It belongs to the arenaviridae nucleocapsid protein family. As to quaternary structure, homomultimerizes to form the nucleocapsid. Binds to viral genomic RNA. Interacts with glycoprotein G2. Interacts with protein Z; this interaction probably directs the encapsidated genome to budding sites. Interacts with protein L; this interaction does not interfere with Z-L interaction. Interacts with host IKBKE (via Protein kinase domain); the interaction inhibits IKBKE kinase activity.

It localises to the virion. Its subcellular location is the host cytoplasm. Encapsidates the genome, protecting it from nucleases. The encapsidated genomic RNA is termed the nucleocapsid (NC). Serves as template for viral transcription and replication. The increased presence of protein N in host cell does not seem to trigger the switch from transcription to replication as observed in other negative strain RNA viruses. Through the interaction with host IKBKE, strongly inhibits the phosphorylation and nuclear translocation of host IRF3, a protein involved in interferon activation pathway, leading to the inhibition of interferon-beta and IRF3-dependent promoters activation. Also encodes a functional 3'-5' exoribonuclease that degrades preferentially dsRNA substrates and thereby participates in the suppression of interferon induction. This Akodon azarae (Azara's grass mouse) protein is Nucleoprotein.